Here is a 244-residue protein sequence, read N- to C-terminus: MDILVPLLQLLVLLLTLPLHLMALLGCWQPLCKSYFPYLMAVLTPKSNRKMESKKRELFSQIKGLTGASGKVALLELGCGTGANFQFYPPGCRVTCLDPNPHFEKFLTKSMAENRHLQYERFVVAPGEDMRQLADGSMDVVVCTLVLCSVQSPRKVLQEVRRVLRPGGVLFFWEHVAEPYGSWAFMWQQVFEPTWKHIGDGCCLTRETWKDLENAQFSEIQMERQPPPLKWLPVGPHIMGKAVK.

Residues 1 to 23 (MDILVPLLQLLVLLLTLPLHLMA) form the signal peptide.

It belongs to the methyltransferase superfamily. As to expression, expressed in the liver.

It localises to the endoplasmic reticulum membrane. It is found in the lipid droplet. The protein resides in the microsome. The protein localises to the cytoplasm. Its subcellular location is the cytosol. The enzyme catalyses a thiol + S-adenosyl-L-methionine = a methyl thioether + S-adenosyl-L-homocysteine + H(+). In terms of biological role, thiol S-methyltransferase that catalyzes the transfer of a methyl group from S-adenosyl-L-methionine to alkyl and phenolic thiol-containing acceptor substrates. Together with TMT1B accounts for most of S-thiol methylation activity in the endoplasmic reticulum of hepatocytes. Selectively methylates S-centered nucleophiles from metabolites such as hydrogen sulfide and dithiothreitol. In Homo sapiens (Human), this protein is Thiol S-methyltransferase TMT1B.